A 694-amino-acid chain; its full sequence is Heat shock protein HSP 90-alpha (694 aa).

Thr-5 and Thr-7 each carry phosphothreonine; by PRKDC. Residues 9–236 are interaction with NR3C1; it reads DQPMEEEEVE…DKEVSDDEAK (228 aa). Asn-51 contacts ATP. 2 positions are modified to N6-acetyllysine: Lys-58 and Lys-84. Asp-93, Lys-112, and Phe-138 together coordinate ATP. A compositionally biased stretch (basic and acidic residues) spans 228-241; the sequence is KEVSDDEAKQPDDK. Residues 228-275 are disordered; that stretch reads KEVSDDEAKQPDDKPEIEDVGSDEEEEEKKDGDIDQEELNKTKPIWTR. Residues Ser-231 and Ser-249 each carry the phosphoserine modification. Residues 242–255 are compositionally biased toward acidic residues; that stretch reads PEIEDVGSDEEEEE. Residues 256–268 are compositionally biased toward basic and acidic residues; sequence KKDGDIDQEELNK. The interaction with NR3C1 stretch occupies residues 258-578; it reads DGDIDQEELN…TANMERIMKA (321 aa). The tract at residues 261-582 is interaction with FNIP2 and TSC1; it reads IDQEELNKTK…ERIMKAQALR (322 aa). The segment at 261–694 is interaction with FLCN and FNIP1; the sequence is IDQEELNKTK…DDTSRMEEVD (434 aa). At Tyr-289 the chain carries Phosphotyrosine. Arg-376 is an ATP binding site. Lys-419 is subject to N6-acetyllysine. Residue Ser-429 is modified to Phosphoserine. Lys-434 carries the N6-acetyllysine modification. Ser-452 carries the phosphoserine modification. Lys-465 carries the post-translational modification N6-acetyllysine. Position 468 is a phosphotyrosine (Tyr-468). Lys-547 is modified (N6-acetyllysine). Cys-560 is modified (S-nitrosocysteine). The segment at 590-693 is interaction with NR1D1; that stretch reads MAAKKHLEVN…DDDTSRMEEV (104 aa). Phosphoserine is present on Ser-603. The interval 644-694 is required for homodimerization; the sequence is QTHANRIYRMIKLGLGIDEDDPTADDTAAAVTEEMPPLEGDDDTSRMEEVD. Residues 662-694 are disordered; it reads EDDPTADDTAAAVTEEMPPLEGDDDTSRMEEVD. The span at 668-677 shows a compositional bias: low complexity; the sequence is DDTAAAVTEE. Residues 685–694 carry the TPR repeat-binding motif; sequence DDTSRMEEVD. Residues 690-694 are essential for interaction with SMYD3, TSC1 and STIP1/HOP; that stretch reads MEEVD. The segment at 691–694 is essential for interaction with SGTA and TTC1; the sequence is EEVD.

The protein belongs to the heat shock protein 90 family. Homodimer. Identified in NR3C1/GCR steroid receptor-chaperone complexes formed at least by NR3C1, HSP90AA1 and a variety of proteins containing TPR repeats such as FKBP4, FKBP5, PPID, PPP5C or STIP1. Forms a complex containing HSP90AA1, TSC1 and TSC2; TSC1 is required to recruit TCS2 to the complex. The closed form interacts (via the middle domain and TPR repeat-binding motif) with co-chaperone TSC1 (via C-terminus). Interacts with TOM34. Interacts with TERT; the interaction, together with PTGES3, is required for correct assembly and stabilization of the TERT holoenzyme complex. Interacts with CHORDC1 and DNAJC7. Interacts with STUB1 and UBE2N; may couple the chaperone and ubiquitination systems. Interacts (via TPR repeat-binding motif) with PPP5C (via TPR repeats); the interaction is direct and activates PPP5C phosphatase activity. Following LPS binding, may form a complex with CXCR4, GDF5 and HSPA8. Interacts with KSR1. Interacts with co-chaperone CDC37 (via C-terminus); the interaction inhibits HSP90AA1 ATPase activity. May interact with NWD1. Interacts with FNIP1 and FNIP2; the interaction inhibits HSP90AA1 ATPase activity. Interacts with co-chaperone AHSA1 (phosphorylated on 'Tyr-223'); the interaction activates HSP90AA1 ATPase activity and results in the dissociation of TSC1 from HSP90AA1. Interacts with FLCN in the presence of FNIP1. Interacts with HSP70, STIP1 and PTGES3. Interacts with SMYD3; this interaction enhances SMYD3 histone-lysine N-methyltransferase. Interacts with SGTA (via TPR repeats). Interacts with TTC1 (via TPR repeats). Interacts with HSF1 in an ATP-dependent manner. Interacts with MET; the interaction suppresses MET kinase activity. Interacts with ERBB2 in an ATP-dependent manner; the interaction suppresses ERBB2 kinase activity. Interacts with HIF1A, KEAP1 and RHOBTB2. Interacts with HSF1; this interaction is decreased in a IER5-dependent manner, promoting HSF1 accumulation in the nucleus, homotrimerization and DNA-binding activities. Interacts with STUB1 and SMAD3. Interacts with HSP90AB1; interaction is constitutive. Interacts with HECTD1 (via N-terminus). Interacts with NR3C1 (via domain NR LBD) and NR1D1 (via domain NR LBD). Interacts with NLPR12. Interacts with PDCL3. Interacts with TOMM70; the interaction is required for preprotein mitochondrial import. Interacts with TOMM70, IRF3 and TBK1; the interactions are direct and mediate the association of TOMM70 with IRF3 and TBK1. Forms a complex with ASL, ASS1 and NOS2; the complex regulates cell-autonomous L-arginine synthesis and citrulline recycling while channeling extracellular L-arginine to nitric oxide synthesis pathway. ISGylated. Post-translationally, S-nitrosylated; negatively regulates the ATPase activity and the activation of eNOS by HSP90AA1. In terms of processing, ubiquitinated via 'Lys-63'-linked polyubiquitination by HECTD1. Ubiquitination promotes translocation into the cytoplasm away from the membrane and secretory pathways.

It is found in the nucleus. The protein localises to the cytoplasm. The protein resides in the melanosome. Its subcellular location is the cell membrane. It localises to the mitochondrion. The catalysed reaction is ATP + H2O = ADP + phosphate + H(+). Its activity is regulated as follows. In the resting state, through the dimerization of its C-terminal domain, HSP90 forms a homodimer which is defined as the open conformation. Upon ATP-binding, the N-terminal domain undergoes significant conformational changes and comes in contact to form an active closed conformation. After HSP90 finishes its chaperoning tasks of assisting the proper folding, stabilization and activation of client proteins under the active state, ATP molecule is hydrolyzed to ADP which then dissociates from HSP90 and directs the protein back to the resting state. Co-chaperone TSC1 promotes ATP binding and inhibits HSP90AA1 ATPase activity. Binding to phosphorylated AHSA1 promotes HSP90AA1 ATPase activity. Inhibited by geldanamycin, Ganetespib (STA-9090) and SNX-2112. In terms of biological role, molecular chaperone that promotes the maturation, structural maintenance and proper regulation of specific target proteins involved for instance in cell cycle control and signal transduction. Undergoes a functional cycle that is linked to its ATPase activity which is essential for its chaperone activity. This cycle probably induces conformational changes in the client proteins, thereby causing their activation. Interacts dynamically with various co-chaperones that modulate its substrate recognition, ATPase cycle and chaperone function. Engages with a range of client protein classes via its interaction with various co-chaperone proteins or complexes, that act as adapters, simultaneously able to interact with the specific client and the central chaperone itself. Recruitment of ATP and co-chaperone followed by client protein forms a functional chaperone. After the completion of the chaperoning process, properly folded client protein and co-chaperone leave HSP90 in an ADP-bound partially open conformation and finally, ADP is released from HSP90 which acquires an open conformation for the next cycle. Plays a critical role in mitochondrial import, delivers preproteins to the mitochondrial import receptor TOMM70. Apart from its chaperone activity, it also plays a role in the regulation of the transcription machinery. HSP90 and its co-chaperones modulate transcription at least at three different levels. In the first place, they alter the steady-state levels of certain transcription factors in response to various physiological cues. Second, they modulate the activity of certain epigenetic modifiers, such as histone deacetylases or DNA methyl transferases, and thereby respond to the change in the environment. Third, they participate in the eviction of histones from the promoter region of certain genes and thereby turn on gene expression. Binds bacterial lipopolysaccharide (LPS) and mediates LPS-induced inflammatory response, including TNF secretion by monocytes. Antagonizes STUB1-mediated inhibition of TGF-beta signaling via inhibition of STUB1-mediated SMAD3 ubiquitination and degradation. Mediates the association of TOMM70 with IRF3 or TBK1 in mitochondrial outer membrane which promotes host antiviral response. This chain is Heat shock protein HSP 90-alpha (HSP90AA1), found in Oryctolagus cuniculus (Rabbit).